We begin with the raw amino-acid sequence, 360 residues long: Glutamine synthetase (360 aa).

Residues I26–G105 form the GS beta-grasp domain. A GS catalytic domain is found at Y112–N360.

Belongs to the glutamine synthetase family. In terms of assembly, homooctamer.

The protein resides in the cytoplasm. The enzyme catalyses L-glutamate + NH4(+) + ATP = L-glutamine + ADP + phosphate + H(+). The polypeptide is Glutamine synthetase (GLN1) (Colletotrichum gloeosporioides (Anthracnose fungus)).